A 113-amino-acid chain; its full sequence is Hydrogenase maturation factor HybF (113 aa).

Histidine 2 and glutamate 3 together coordinate Ni(2+). 4 residues coordinate Zn(2+): cysteine 73, cysteine 76, cysteine 89, and cysteine 92.

It belongs to the HypA/HybF family. HybF subfamily.

Its function is as follows. Involved in the maturation of [NiFe] hydrogenases. Required for nickel insertion into the metal center of the hydrogenase. This is Hydrogenase maturation factor HybF from Klebsiella pneumoniae.